We begin with the raw amino-acid sequence, 368 residues long: Phospho-N-acetylmuramoyl-pentapeptide-transferase (368 aa).

9 consecutive transmembrane segments (helical) span residues 30–50 (AAAI…IKYL), 72–92 (LPTM…LLWS), 95–115 (IDPH…IGFI), 139–159 (VTLG…SVLL), 169–189 (YLTI…ITAV), 208–228 (AIVV…VYAV), 238–258 (GGEI…FLWF), 264–286 (EIIM…ALLI), and 345–365 (KIVI…LMTL).

It belongs to the glycosyltransferase 4 family. MraY subfamily. Mg(2+) is required as a cofactor.

The protein localises to the cell inner membrane. It carries out the reaction UDP-N-acetyl-alpha-D-muramoyl-L-alanyl-gamma-D-glutamyl-meso-2,6-diaminopimeloyl-D-alanyl-D-alanine + di-trans,octa-cis-undecaprenyl phosphate = di-trans,octa-cis-undecaprenyl diphospho-N-acetyl-alpha-D-muramoyl-L-alanyl-D-glutamyl-meso-2,6-diaminopimeloyl-D-alanyl-D-alanine + UMP. It functions in the pathway cell wall biogenesis; peptidoglycan biosynthesis. Functionally, catalyzes the initial step of the lipid cycle reactions in the biosynthesis of the cell wall peptidoglycan: transfers peptidoglycan precursor phospho-MurNAc-pentapeptide from UDP-MurNAc-pentapeptide onto the lipid carrier undecaprenyl phosphate, yielding undecaprenyl-pyrophosphoryl-MurNAc-pentapeptide, known as lipid I. This chain is Phospho-N-acetylmuramoyl-pentapeptide-transferase, found in Pelodictyon phaeoclathratiforme (strain DSM 5477 / BU-1).